Reading from the N-terminus, the 366-residue chain is Chorismate synthase (366 aa).

Positions 48 and 54 each coordinate NADP(+). FMN-binding positions include 125-127 (RSS), 238-239 (NA), glycine 278, 293-297 (KPTSS), and arginine 319.

This sequence belongs to the chorismate synthase family. Homotetramer. Requires FMNH2 as cofactor.

It catalyses the reaction 5-O-(1-carboxyvinyl)-3-phosphoshikimate = chorismate + phosphate. Its pathway is metabolic intermediate biosynthesis; chorismate biosynthesis; chorismate from D-erythrose 4-phosphate and phosphoenolpyruvate: step 7/7. Its function is as follows. Catalyzes the anti-1,4-elimination of the C-3 phosphate and the C-6 proR hydrogen from 5-enolpyruvylshikimate-3-phosphate (EPSP) to yield chorismate, which is the branch point compound that serves as the starting substrate for the three terminal pathways of aromatic amino acid biosynthesis. This reaction introduces a second double bond into the aromatic ring system. The sequence is that of Chorismate synthase from Pseudoalteromonas atlantica (strain T6c / ATCC BAA-1087).